The chain runs to 304 residues: Recombination-associated protein RdgC (304 aa).

This sequence belongs to the RdgC family.

It localises to the cytoplasm. The protein localises to the nucleoid. Its function is as follows. May be involved in recombination. This chain is Recombination-associated protein RdgC, found in Shewanella baltica (strain OS185).